A 175-amino-acid chain; its full sequence is Sec-independent protein translocase protein TatB (175 aa).

The chain crosses the membrane as a helical span at residues 1–21; sequence MLDLGLSKMALIGVVALVVLG. Low complexity predominate over residues 94–115; the sequence is SAVSPGGSAAADAPDGPSAASG. Disordered regions lie at residues 94 to 118 and 153 to 175; these read SAVS…GEPS and VQSG…ARFL. A compositionally biased stretch (basic residues) spans 160–175; sequence VARHRPASLRRPARFL.

This sequence belongs to the TatB family. As to quaternary structure, the Tat system comprises two distinct complexes: a TatABC complex, containing multiple copies of TatA, TatB and TatC subunits, and a separate TatA complex, containing only TatA subunits. Substrates initially bind to the TatABC complex, which probably triggers association of the separate TatA complex to form the active translocon.

The protein resides in the cell inner membrane. Its function is as follows. Part of the twin-arginine translocation (Tat) system that transports large folded proteins containing a characteristic twin-arginine motif in their signal peptide across membranes. Together with TatC, TatB is part of a receptor directly interacting with Tat signal peptides. TatB may form an oligomeric binding site that transiently accommodates folded Tat precursor proteins before their translocation. This is Sec-independent protein translocase protein TatB from Burkholderia pseudomallei (strain 1106a).